Here is a 360-residue protein sequence, read N- to C-terminus: Phospho-N-acetylmuramoyl-pentapeptide-transferase (360 aa).

Transmembrane regions (helical) follow at residues 21-41 (YVTF…LWWG), 74-94 (MGGI…GDLA), 97-117 (YVWV…IDDY), 135-155 (ILQS…ADLV), 168-188 (IMPQ…VGSS), 199-219 (GLAI…AYLS), 236-256 (AGEL…FLWF), 263-283 (VFMG…IAVL), 288-308 (ILLV…ILQV), and 338-358 (VIVR…ATLK).

Belongs to the glycosyltransferase 4 family. MraY subfamily. The cofactor is Mg(2+).

The protein resides in the cell inner membrane. The catalysed reaction is UDP-N-acetyl-alpha-D-muramoyl-L-alanyl-gamma-D-glutamyl-meso-2,6-diaminopimeloyl-D-alanyl-D-alanine + di-trans,octa-cis-undecaprenyl phosphate = di-trans,octa-cis-undecaprenyl diphospho-N-acetyl-alpha-D-muramoyl-L-alanyl-D-glutamyl-meso-2,6-diaminopimeloyl-D-alanyl-D-alanine + UMP. It functions in the pathway cell wall biogenesis; peptidoglycan biosynthesis. In terms of biological role, catalyzes the initial step of the lipid cycle reactions in the biosynthesis of the cell wall peptidoglycan: transfers peptidoglycan precursor phospho-MurNAc-pentapeptide from UDP-MurNAc-pentapeptide onto the lipid carrier undecaprenyl phosphate, yielding undecaprenyl-pyrophosphoryl-MurNAc-pentapeptide, known as lipid I. The chain is Phospho-N-acetylmuramoyl-pentapeptide-transferase from Shewanella sediminis (strain HAW-EB3).